Consider the following 407-residue polypeptide: Immunoglobulin superfamily member 5 (407 aa).

Topologically, residues 1–266 are extracellular; sequence MGQKERSTAD…LGFSLPTWGK (266 aa). Ig-like V-type domains follow at residues 39–139 and 142–231; these read NEVI…LTVQ and GELF…ATVN. Asn59, Asn103, Asn210, and Asn231 each carry an N-linked (GlcNAc...) asparagine glycan. Disulfide bonds link Cys60–Cys123 and Cys163–Cys215. A helical membrane pass occupies residues 267-285; that stretch reads VGLGLAGTMLLTPTCTLTI. At 286 to 407 the chain is on the cytoplasmic side; the sequence is RCCCCRRRCC…PEKVSNTTVV (122 aa). Residues 320–331 show a composition bias toward basic and acidic residues; sequence KSEKEKTNKETE. The interval 320–407 is disordered; that stretch reads KSEKEKTNKE…PEKVSNTTVV (88 aa). Positions 389-407 are enriched in polar residues; sequence PQASFNLASPEKVSNTTVV.

It belongs to the immunoglobulin superfamily. As to quaternary structure, interacts with MAGI1 at tight junctions, forms a tripartite complex with NPHS1. Interacts with LNX1 isoform 2 via its PDZ 2 domain, it may also interact with other isoforms containing this domain.

The protein localises to the apical cell membrane. It is found in the cell junction. Its subcellular location is the tight junction. Its function is as follows. Provides, together with MAGI1, an adhesion machinery at tight junctions, which may regulate the permeability of kidney glomerulus and small intestinal epithelial cells. Mediates calcium-independent homophilic cell adhesion. In testis, it may function as a cell adhesion molecule rather than a tight-junction protein. It may participate in the adhesion between spermatogonia-spermatogonia, spermatogonia-Sertoli cells, and Sertoli cells-Sertoli cells. The sequence is that of Immunoglobulin superfamily member 5 (IGSF5) from Homo sapiens (Human).